The following is a 438-amino-acid chain: CLSKKFEVAEFAGLRSSGCVTFSNKESSFFDVVSAQLTPKTTRSTPVKGETVAKLKVAINGFGRIGRNFLRCWHGRKDSPLDVVVVNDSGGVKNASHLLKYDSMLGTFKADVKIVDNETISVDGKHIKVVSSRDPLKLPWAELGIDIVIEGTGVFVDGPGAGKHIQAGAKKVIITAPAKGADIPTYVVGVNEQDYSHEVADIISNASCTTNCLAPFVKVMDEELGIVKGTMTTTHSYTGDQRLLDASHRDLRRARAAALNIVPTSTGAAKAVSLVLPQLKGKLNGIALRVPTPNVSVVDLVVNVAKKGITAEDVNAAFRKAADGPLKGVLAVCDEPLVSVDFRCSDVSSTIDSSLTMVMGDDMVKVVAWYDNEWGYSQRVVDLAHLVANNWPGSCSTRKWRSHWMSFARQILLMRNAKSMNNRFCYVSSFEMDDFRSQ.

The transit peptide at 1–53 directs the protein to the chloroplast; it reads CLSKKFEVAEFAGLRSSGCVTFSNKESSFFDVVSAQLTPKTTRSTPVKGETVA. Residues 64 to 65, D88, and R133 contribute to the NADP(+) site; that span reads RI. Residues 207-209, T238, R253, 266-267, and R289 contribute to the D-glyceraldehyde 3-phosphate site; these read SCT and TG. C208 acts as the Nucleophile in catalysis. Residue N372 participates in NADP(+) binding.

This sequence belongs to the glyceraldehyde-3-phosphate dehydrogenase family. Tetramer of either four A chains (GAPDH 2) or two A and two B chains (GAPDH 1).

It is found in the plastid. Its subcellular location is the chloroplast. The enzyme catalyses D-glyceraldehyde 3-phosphate + phosphate + NADP(+) = (2R)-3-phospho-glyceroyl phosphate + NADPH + H(+). The protein operates within carbohydrate biosynthesis; Calvin cycle. The protein is Glyceraldehyde-3-phosphate dehydrogenase B, chloroplastic (GAPB) of Nicotiana tabacum (Common tobacco).